A 205-amino-acid chain; its full sequence is ATP phosphoribosyltransferase (205 aa).

This sequence belongs to the ATP phosphoribosyltransferase family. Short subfamily. In terms of assembly, heteromultimer composed of HisG and HisZ subunits.

The protein localises to the cytoplasm. The enzyme catalyses 1-(5-phospho-beta-D-ribosyl)-ATP + diphosphate = 5-phospho-alpha-D-ribose 1-diphosphate + ATP. Its pathway is amino-acid biosynthesis; L-histidine biosynthesis; L-histidine from 5-phospho-alpha-D-ribose 1-diphosphate: step 1/9. Functionally, catalyzes the condensation of ATP and 5-phosphoribose 1-diphosphate to form N'-(5'-phosphoribosyl)-ATP (PR-ATP). Has a crucial role in the pathway because the rate of histidine biosynthesis seems to be controlled primarily by regulation of HisG enzymatic activity. This is ATP phosphoribosyltransferase from Vesicomyosocius okutanii subsp. Calyptogena okutanii (strain HA).